The chain runs to 320 residues: HPr kinase/phosphorylase (320 aa).

Active-site residues include H141 and K162. G156–S163 provides a ligand contact to ATP. S163 lines the Mg(2+) pocket. The active-site Proton acceptor; for phosphorylation activity. Proton donor; for dephosphorylation activity is D180. The segment at L204 to N213 is important for the catalytic mechanism of both phosphorylation and dephosphorylation. Position 205 (E205) interacts with Mg(2+). Residue R248 is part of the active site. The important for the catalytic mechanism of dephosphorylation stretch occupies residues P269–R274.

Belongs to the HPrK/P family. In terms of assembly, homohexamer. The cofactor is Mg(2+).

The catalysed reaction is [HPr protein]-L-serine + ATP = [HPr protein]-O-phospho-L-serine + ADP + H(+). The enzyme catalyses [HPr protein]-O-phospho-L-serine + phosphate + H(+) = [HPr protein]-L-serine + diphosphate. Its function is as follows. Catalyzes the ATP- as well as the pyrophosphate-dependent phosphorylation of a specific serine residue in HPr, a phosphocarrier protein of the phosphoenolpyruvate-dependent sugar phosphotransferase system (PTS). HprK/P also catalyzes the pyrophosphate-producing, inorganic phosphate-dependent dephosphorylation (phosphorolysis) of seryl-phosphorylated HPr (P-Ser-HPr). The sequence is that of HPr kinase/phosphorylase from Neisseria meningitidis serogroup A / serotype 4A (strain DSM 15465 / Z2491).